A 77-amino-acid polypeptide reads, in one-letter code: Large ribosomal subunit protein bL28 (77 aa).

Belongs to the bacterial ribosomal protein bL28 family.

The polypeptide is Large ribosomal subunit protein bL28 (Ralstonia pickettii (strain 12J)).